The chain runs to 516 residues: MLNPKVAYMVWMTCLGLMLPSQAQSNDYRPSYHFTPDQYWMNEPNGLIKIGSTWHLFFQHNPTANVWGNICWGHATSTDLMHWAHKPTAIADENGVEAFTGTAYYDPNNTSGLGDSANPPYLAWFTGYTTSSQTQDQRLAFSVDNGATWTKFQGNPIISTSQEAPHDITGGLESRDPKVFFHRQSGNWIMVLAHGGQDKLSFWTSADTINWTWQSDLKSTSINGLSSDITGWEVPDMFELPVEGTEETTWVVMMTPAEGSPAGGNGVLAITGSFDGKSFTADPVDASTMWLDNGRDFDGALSWVNVPASDGRRIIAAVMNSYGSNPPTTTWKGMLSFPRTLSLKKVGTQQHFVQQPITELDTISTSLQTLANQTITPGQTLLSSIRGTALDVRVAFYPDAGSVLSLAVRKGASEQTVINYTQSDATLSVDRTESGDISYDPAAGGVHTAKLEEDGTGLVSIRVLVDTCSVEVFGGQGEAVISDLIFPSDSSDGLALEVTGGNAVLQSVDVRSVSLE.

The N-terminal stretch at 1-25 is a signal peptide; sequence MLNPKVAYMVWMTCLGLMLPSQAQS. Substrate-binding positions include 40–43, Q59, W67, and 99–100; these read WMNE and FT. The active site involves E43. Residue N109 is glycosylated (N-linked (GlcNAc...) asparagine). 175-176 is a substrate binding site; it reads RD. N210 carries an N-linked (GlcNAc...) asparagine glycan. E233 contacts substrate. Residues N372 and N419 are each glycosylated (N-linked (GlcNAc...) asparagine).

The protein belongs to the glycosyl hydrolase 32 family.

It is found in the secreted. It carries out the reaction Endohydrolysis of (2-&gt;1)-beta-D-fructosidic linkages in inulin.. With respect to regulation, activity is stimulated by Mn(2+), Fe(2+) Ca(2+) metal ions and DTT; and inhibited by glucose, Mg(2+), Zn(2+), Cu(2+), Hg(2+), Al(3+), and Fe(3+). Its function is as follows. Endo-inulinase involved in utilization of the plant storage polymer inulin, consisting of fructooligosaccharides with a degree of polymerization (DP) value from 2 to 60. The sequence is that of Extracellular endo-inulinase inuA (inuA) from Aspergillus niger.